The primary structure comprises 456 residues: MNLWTKIFQPPCHIKEISDPELVKKQYKYWRMRIFYSMFLGYVFFYFTRKSFTFAMPTLIADLGFDKAQLGIIGSTLYITYGISKFVSGVMSDQSNPRYFMAIGLIITGISNIFFGLSSTIPLFVLFWGINGWFQGWGWPPCARLLTHWYSKSERGTWWSVWSTSHNIGGALIPVLTGVAIDYTGWRGAMFIPGIICIIMGFILIDRLRDTPQSLGLPAIEKFRKEEDAHPHEETTADILEEEAERELSTKEILFTYVLSNKWLWFLSFASFFIYVVRMAVNDWSALYLIETKDYSTVKANLCVSLFEIGGLFGMLLAGWLSDTISKGKRGPMNVVFSLGLLVSILGLWGTRDYFVWWIDGTFLFIIGFFLFGPQMMIGLAAAELSHKKAAGTASGFTGWFAYFGAAFAGYPLGKVAQDWGWHGFFVALLACALIALILFLPTWNASEQSLRKHSH.

The next 11 helical transmembrane spans lie at 34-54 (IFYS…SFTF), 70-90 (LGII…VSGV), 113-133 (IFFG…INGW), 161-181 (VWST…GVAI), 185-205 (GWRG…FILI), 257-277 (YVLS…IYVV), 302-322 (LCVS…GWLS), 331-351 (GPMN…LWGT), 363-383 (FLFI…LAAA), 394-414 (ASGF…YPLG), and 421-441 (GWHG…ILFL).

This sequence belongs to the major facilitator superfamily. Organophosphate:Pi antiporter (OPA) (TC 2.A.1.4) family.

It localises to the cell membrane. In terms of biological role, transport protein for sugar phosphate uptake. The polypeptide is Probable hexose phosphate transport protein (Chlamydia trachomatis serovar D (strain ATCC VR-885 / DSM 19411 / UW-3/Cx)).